Reading from the N-terminus, the 202-residue chain is Prohormone-4 (202 aa).

The first 28 residues, 1 to 28 (MVQRLCTSVAALSLALSACVFFPRAVMA), serve as a signal peptide directing secretion. The 41-residue stretch at 46 to 86 (ACRPYEPFKCPGDDTCISIQYLCDGAPDCQDGYDEDSRLCT) folds into the LDL-receptor class A domain. 3 disulfide bridges follow: cysteine 47–cysteine 61, cysteine 55–cysteine 74, and cysteine 68–cysteine 85.

The protein resides in the secreted. The protein is Prohormone-4 of Apis mellifera (Honeybee).